The following is a 339-amino-acid chain: Pleckstrin homology domain protein opy1 (339 aa).

A PH 1 domain is found at 25–119 (RVLKSGWLIK…WVHVLRSTTG (95 aa)). Over residues 141–167 (ESEPNVQISDTDFDNISTEPRNQTTSP) the composition is skewed to polar residues. The interval 141–170 (ESEPNVQISDTDFDNISTEPRNQTTSPLDL) is disordered. The region spanning 233–330 (KVLMQGTIHW…WVAALKTSID (98 aa)) is the PH 2 domain.

Interacts (via domain PH 1) with phosphatidylinositol 4-phosphate 5-kinase its3; the interaction is direct but opy1 does not appear to regulate its3 localization or function.

It localises to the cell tip. It is found in the cell membrane. Functionally, binds phosphatidylinositol 4,5-bisphosphate (PtdIns(4,5)P2/PIP2) at the cell membrane. The sequence is that of Pleckstrin homology domain protein opy1 from Schizosaccharomyces pombe (strain 972 / ATCC 24843) (Fission yeast).